A 211-amino-acid polypeptide reads, in one-letter code: Uracil phosphoribosyltransferase (211 aa).

5-phospho-alpha-D-ribose 1-diphosphate is bound by residues Arg-78, Arg-103, and 130–138 (DPMLATGAT). Uracil is bound by residues Ile-195 and 200-202 (GDA). Asp-201 contacts 5-phospho-alpha-D-ribose 1-diphosphate.

This sequence belongs to the UPRTase family. Mg(2+) serves as cofactor.

The catalysed reaction is UMP + diphosphate = 5-phospho-alpha-D-ribose 1-diphosphate + uracil. Its pathway is pyrimidine metabolism; UMP biosynthesis via salvage pathway; UMP from uracil: step 1/1. Its activity is regulated as follows. Allosterically activated by GTP. Functionally, catalyzes the conversion of uracil and 5-phospho-alpha-D-ribose 1-diphosphate (PRPP) to UMP and diphosphate. The sequence is that of Uracil phosphoribosyltransferase from Renibacterium salmoninarum (strain ATCC 33209 / DSM 20767 / JCM 11484 / NBRC 15589 / NCIMB 2235).